We begin with the raw amino-acid sequence, 248 residues long: Ribonuclease PH (248 aa).

Phosphate-binding positions include Arg93 and 131 to 133; that span reads GTR.

This sequence belongs to the RNase PH family. As to quaternary structure, homohexameric ring arranged as a trimer of dimers.

It carries out the reaction tRNA(n+1) + phosphate = tRNA(n) + a ribonucleoside 5'-diphosphate. In terms of biological role, phosphorolytic 3'-5' exoribonuclease that plays an important role in tRNA 3'-end maturation. Removes nucleotide residues following the 3'-CCA terminus of tRNAs; can also add nucleotides to the ends of RNA molecules by using nucleoside diphosphates as substrates, but this may not be physiologically important. Probably plays a role in initiation of 16S rRNA degradation (leading to ribosome degradation) during starvation. This Bifidobacterium longum (strain NCC 2705) protein is Ribonuclease PH.